Consider the following 435-residue polypeptide: Methylenetetrahydrofolate--tRNA-(uracil-5-)-methyltransferase TrmFO (435 aa).

10–15 (GAGLAG) contacts FAD.

The protein belongs to the MnmG family. TrmFO subfamily. Homodimer. Requires FAD as cofactor.

Its subcellular location is the cytoplasm. The catalysed reaction is uridine(54) in tRNA + (6R)-5,10-methylene-5,6,7,8-tetrahydrofolate + NADH + H(+) = 5-methyluridine(54) in tRNA + (6S)-5,6,7,8-tetrahydrofolate + NAD(+). The enzyme catalyses uridine(54) in tRNA + (6R)-5,10-methylene-5,6,7,8-tetrahydrofolate + NADPH + H(+) = 5-methyluridine(54) in tRNA + (6S)-5,6,7,8-tetrahydrofolate + NADP(+). Its function is as follows. Catalyzes the folate-dependent formation of 5-methyl-uridine at position 54 (M-5-U54) in all tRNAs. This Bacillus subtilis (strain 168) protein is Methylenetetrahydrofolate--tRNA-(uracil-5-)-methyltransferase TrmFO.